Consider the following 394-residue polypeptide: Ketoisovalerate oxidoreductase subunit VorA (394 aa).

Heterotetramer of one alpha, one beta, one delta and one gamma chain.

It catalyses the reaction 3-methyl-2-oxobutanoate + 2 oxidized [2Fe-2S]-[ferredoxin] + CoA = 2-methylpropanoyl-CoA + 2 reduced [2Fe-2S]-[ferredoxin] + CO2 + H(+). In Pyrococcus horikoshii (strain ATCC 700860 / DSM 12428 / JCM 9974 / NBRC 100139 / OT-3), this protein is Ketoisovalerate oxidoreductase subunit VorA (vorA).